A 4022-amino-acid chain; its full sequence is Intermembrane lipid transfer protein VPS13B (4022 aa).

Residues 2 to 102 (LESYVTPILM…KDGIQDDHES (101 aa)) enclose the Chorein N-terminal domain. The segment at 100–134 (HESCGSNSTNRSTAESTKSSIKPRRMQQAAPTDPD) is disordered. A compositionally biased stretch (polar residues) spans 103 to 119 (CGSNSTNRSTAESTKSS). 4 positions are modified to phosphoserine: Ser-414, Ser-999, Ser-1002, and Ser-1033. Residues 1247–1314 (NLSPTSPETM…SVTLEQTTSN (68 aa)) are disordered. Polar residues-rich tracts occupy residues 1264–1292 (PVRSSIGTAPPDTSTCSPSADIGTTTEGD) and 1302–1314 (FSDSVTLEQTTSN). Position 1815 is a phosphoserine (Ser-1815). The segment covering 1860–1872 (KSQEQKNNEKTDK) has biased composition (basic and acidic residues). Residues 1860–1880 (KSQEQKNNEKTDKSSLNLPEV) are disordered. The 86-residue stretch at 2631–2716 (HFVICNDTQE…RTASLIIKVQ (86 aa)) folds into the SHR-BD domain. The localizes the protein to the Golgi apparatus stretch occupies residues 3908 to 4022 (AFPVTEIDCA…KNKALRKGFP (115 aa)).

It belongs to the VPS13 family. As to quaternary structure, interacts with STX6. Interacts with STX12. Interacts with RAB6A isoform 1 (GTP-bound) and isoform 2 (GTP-bound). Interacts with RAB6B (GTP-bound). As to expression, widely expressed. There is apparent differential expression of different transcripts. In fetal brain, lung, liver, and kidney, two transcripts of 2 and 5 kb are identified. These transcripts are also seen in all adult tissues analyzed. A larger transcript (12-14 kb) is expressed in prostate, testis, ovary, and colon in the adult. Expression is very low in adult brain tissue. Expressed in peripheral blood lymphocytes. Isoform 1 and isoform 2 are expressed in brain and retina. Isoform 2 is expressed ubiquitously.

It is found in the recycling endosome membrane. Its subcellular location is the cytoplasmic vesicle. The protein resides in the secretory vesicle. The protein localises to the acrosome membrane. It localises to the golgi apparatus. It is found in the cis-Golgi network membrane. Its subcellular location is the endoplasmic reticulum-Golgi intermediate compartment membrane. The protein resides in the trans-Golgi network membrane. The protein localises to the early endosome membrane. It localises to the lysosome membrane. Mediates the transfer of lipids between membranes at organelle contact sites. Binds phosphatidylinositol 3-phosphate. Functions as a tethering factor in the slow endocytic recycling pathway, to assist traffic between early and recycling endosomes. Involved in the transport of proacrosomal vesicles to the nuclear dense lamina (NDL) during spermatid development. Plays a role in the assembly of the Golgi apparatus, possibly by mediating trafficking to the Golgi membrane. Plays a role in the development of the nervous system, and may be required for neuron projection development. May also play a role during adipose tissue development. Required for maintenance of the ocular lens. In Homo sapiens (Human), this protein is Intermembrane lipid transfer protein VPS13B (VPS13B).